The primary structure comprises 342 residues: MKIKVGILGASGYAGNELVRILLNHPKVEISYLGSSSSVGQNYQDLYPDTPLNLCFENKNLDELELDLLFLATPHEFSAKLLNENLLKKMKIIDLSADFRLKNPKDYELWYKFTHPNQELLQNAIYGLCELYKEEIKKASLVANPGCYTTCSILSLYPLFKEKIIDFNSVIIDAKSGVSGAGRSAKVENLFCEVNENIKAYGLASHRHTPEIEEHLSYVAKEKITLQFTPHLVPMQRGILISAYANLKENLQEQDIRDIYTKYYQNNKFIRLLPPQSLPQTRWVKSSNFADINFSIDQRTKRVIVLGAIDNLIKGAAGQAVQNMNLMFDFDEDEGLKFFANL.

Residue C147 is part of the active site.

It belongs to the NAGSA dehydrogenase family. Type 1 subfamily.

Its subcellular location is the cytoplasm. It catalyses the reaction N-acetyl-L-glutamate 5-semialdehyde + phosphate + NADP(+) = N-acetyl-L-glutamyl 5-phosphate + NADPH + H(+). The protein operates within amino-acid biosynthesis; L-arginine biosynthesis; N(2)-acetyl-L-ornithine from L-glutamate: step 3/4. Functionally, catalyzes the NADPH-dependent reduction of N-acetyl-5-glutamyl phosphate to yield N-acetyl-L-glutamate 5-semialdehyde. The chain is N-acetyl-gamma-glutamyl-phosphate reductase from Campylobacter jejuni subsp. doylei (strain ATCC BAA-1458 / RM4099 / 269.97).